The chain runs to 229 residues: MIRAIVTDIEGTTSDIRFVHNVLFPYARERLAGFVTAQQHAEPVKTILDNLRRETDAPAASTADLITTLFAFMDEDRKSTALKALQGIIWRDGYLNGDFTGHLYPDVLPALEQWKAQGIDLYVYSSGSVAAQKLLFGYSDEGDITHLFTGYFDTLVGAKREVQSYRNIAEHLGHAPGTILFLSDIHQELDAAEAAGLRTIQLVRGDRDPASHHPQVQRFDDIHPEQIPA.

Residues 207-229 (RDPASHHPQVQRFDDIHPEQIPA) form a disordered region. The span at 218-229 (RFDDIHPEQIPA) shows a compositional bias: basic and acidic residues.

The protein belongs to the HAD-like hydrolase superfamily. MasA/MtnC family. As to quaternary structure, monomer. It depends on Mg(2+) as a cofactor.

It catalyses the reaction 5-methylsulfanyl-2,3-dioxopentyl phosphate + H2O = 1,2-dihydroxy-5-(methylsulfanyl)pent-1-en-3-one + phosphate. The protein operates within amino-acid biosynthesis; L-methionine biosynthesis via salvage pathway; L-methionine from S-methyl-5-thio-alpha-D-ribose 1-phosphate: step 3/6. Its pathway is amino-acid biosynthesis; L-methionine biosynthesis via salvage pathway; L-methionine from S-methyl-5-thio-alpha-D-ribose 1-phosphate: step 4/6. Functionally, bifunctional enzyme that catalyzes the enolization of 2,3-diketo-5-methylthiopentyl-1-phosphate (DK-MTP-1-P) into the intermediate 2-hydroxy-3-keto-5-methylthiopentenyl-1-phosphate (HK-MTPenyl-1-P), which is then dephosphorylated to form the acireductone 1,2-dihydroxy-3-keto-5-methylthiopentene (DHK-MTPene). This Klebsiella pneumoniae subsp. pneumoniae (strain ATCC 700721 / MGH 78578) protein is Enolase-phosphatase E1.